Consider the following 274-residue polypeptide: Malonyl-[acyl-carrier protein] O-methyltransferase (274 aa).

The protein belongs to the methyltransferase superfamily.

It catalyses the reaction malonyl-[ACP] + S-adenosyl-L-methionine = malonyl-[ACP] methyl ester + S-adenosyl-L-homocysteine. Its pathway is cofactor biosynthesis; biotin biosynthesis. Converts the free carboxyl group of a malonyl-thioester to its methyl ester by transfer of a methyl group from S-adenosyl-L-methionine (SAM). It allows to synthesize pimeloyl-ACP via the fatty acid synthetic pathway. In Bacteroides helcogenes (strain ATCC 35417 / DSM 20613 / JCM 6297 / CCUG 15421 / P 36-108), this protein is Malonyl-[acyl-carrier protein] O-methyltransferase.